We begin with the raw amino-acid sequence, 415 residues long: Beta-1,4-glucuronyltransferase 1 (415 aa).

Residues 1–8 (MQMSYAIR) lie on the Cytoplasmic side of the membrane. Residues 9–36 (CAFYQLLLAALMLVAMLQLLYLSLLSGL) traverse the membrane as a helical; Signal-anchor for type II membrane protein segment. Topologically, residues 37–415 (HGQEEQDQYF…AKYPDSPRHC (379 aa)) are lumenal. Asn204 is a glycosylation site (N-linked (GlcNAc...) asparagine). Residues Asp227 and Asp229 each contribute to the Mn(2+) site. Asn300 is a glycosylation site (N-linked (GlcNAc...) asparagine).

Belongs to the glycosyltransferase 49 family. As to quaternary structure, interacts with LARGE1 and LARGE2. It depends on Mn(2+) as a cofactor.

The protein resides in the golgi apparatus membrane. The enzyme catalyses 3-O-[beta-D-Xyl-(1-&gt;4)-Rib-ol-P-Rib-ol-P-3-beta-D-GalNAc-(1-&gt;3)-beta-D-GlcNAc-(1-&gt;4)-(O-6-P-alpha-D-Man)]-Thr-[protein] + UDP-alpha-D-glucuronate = 3-O-[beta-D-GlcA-(1-&gt;3)-beta-D-Xyl-(1-&gt;4)-Rib-ol-P-Rib-ol-P-3-beta-D-GalNAc-(1-&gt;3)-beta-D-GlcNAc-(1-&gt;4)-(O-6-P-alpha-D-Man)]-Thr-[protein] + UDP + H(+). The protein operates within protein modification; protein glycosylation. In terms of biological role, beta-1,4-glucuronyltransferase involved in O-mannosylation of alpha-dystroglycan (DAG1). Transfers a glucuronic acid (GlcA) residue onto a xylose (Xyl) acceptor to produce the glucuronyl-beta-1,4-xylose-beta disaccharide primer, which is further elongated by LARGE1, during synthesis of phosphorylated O-mannosyl glycan. Phosphorylated O-mannosyl glycan is a carbohydrate structure present in alpha-dystroglycan (DAG1), which is required for binding laminin G-like domain-containing extracellular proteins with high affinity. Required for axon guidance; via its function in O-mannosylation of alpha-dystroglycan (DAG1). The sequence is that of Beta-1,4-glucuronyltransferase 1 from Bos taurus (Bovine).